A 264-amino-acid chain; its full sequence is Indole-3-glycerol phosphate synthase (264 aa).

The protein belongs to the TrpC family.

The catalysed reaction is 1-(2-carboxyphenylamino)-1-deoxy-D-ribulose 5-phosphate + H(+) = (1S,2R)-1-C-(indol-3-yl)glycerol 3-phosphate + CO2 + H2O. It functions in the pathway amino-acid biosynthesis; L-tryptophan biosynthesis; L-tryptophan from chorismate: step 4/5. The polypeptide is Indole-3-glycerol phosphate synthase (Albidiferax ferrireducens (strain ATCC BAA-621 / DSM 15236 / T118) (Rhodoferax ferrireducens)).